We begin with the raw amino-acid sequence, 320 residues long: Tyrosine phosphatase H3 (320 aa).

Positions 22-309 constitute a Tyrosine-protein phosphatase domain; it reads NFWEFVRLEH…AFCYKAVRYA (288 aa). Cys250 functions as the Phosphocysteine intermediate in the catalytic mechanism.

This sequence belongs to the protein-tyrosine phosphatase family.

The catalysed reaction is O-phospho-L-tyrosyl-[protein] + H2O = L-tyrosyl-[protein] + phosphate. Suppresses host immune cell adhesion and phagocytosis. This Microplitis demolitor (Parasitoid wasp) protein is Tyrosine phosphatase H3 (H3).